The following is a 427-amino-acid chain: Probable anaerobic glycerol-3-phosphate dehydrogenase subunit B (427 aa).

This sequence belongs to the anaerobic G-3-P dehydrogenase subunit B family. The cofactor is FMN.

It catalyses the reaction a quinone + sn-glycerol 3-phosphate = dihydroxyacetone phosphate + a quinol. It participates in polyol metabolism; glycerol degradation via glycerol kinase pathway; glycerone phosphate from sn-glycerol 3-phosphate (anaerobic route): step 1/1. This is Probable anaerobic glycerol-3-phosphate dehydrogenase subunit B from Halobacterium salinarum (strain ATCC 29341 / DSM 671 / R1).